Consider the following 357-residue polypeptide: Fluoren-9-ol dehydrogenase (357 aa).

Residues 36–67 (VTGG…TWDD) and Asp87 each bind NADP(+). The Proton acceptor role is filled by Tyr198. Lys202 provides a ligand contact to NADP(+).

It belongs to the short-chain dehydrogenases/reductases (SDR) family.

It catalyses the reaction 9H-fluoren-9-ol + NADP(+) = 9H-fluoren-9-one + NADPH + H(+). The enzyme catalyses 9H-fluoren-9-ol + NAD(+) = 9H-fluoren-9-one + NADH + H(+). It functions in the pathway aromatic compound metabolism. Catalyzes the dehydrogenation of both 9-fluorenol and 1,1a-dihydroxy-1-hydro-9-fluorenone to produce 9-fluorenone and 2'-carboxy-2,3- dihydroxybiphenyl, respectively. The protein is Fluoren-9-ol dehydrogenase of Terrabacter sp. (strain DBF63).